A 448-amino-acid chain; its full sequence is MTARSSLTIVLAAGEGTRMRSSLPKVLHPIAGESMLAHVLAAAPQGDGAAIAVVIGPGHDAVEKEAKRLCPDVAIFVQRERLGTAHAVLAAREAIARGADDLLVAFGDTPLITAETFARLRAALAQGAALAVLGFRAVDPTGYGRLLLDGSKLVAIREHADASEAERAITLCNAGVMAMDGRRALAILDKIGNTNSKGEYYLVDAVAIARSQGLDAVVIETSEDEVRGINTKAQLAQAEAAMQARLRQAAMDAGVTLIAPETVYLAADTTFGRDVTIEPFVVIGPGVSIGDGAVVHSFSHVVQSKLGSNTLLGPFARLRPGTSLGDGAKIGNFVEAKAAVLEPGVKVNHLSYIGDAHVGAHSNIGAGTITCNYDGFNKHKTRIGEGAFIGTNTSLVAPINIGARAYIGSGSVITRDVPDDALALERSPQTTKEGAAARFRNAKLRQTK.

A pyrophosphorylase region spans residues 1 to 232 (MTARSSLTIV…EDEVRGINTK (232 aa)). UDP-N-acetyl-alpha-D-glucosamine is bound by residues 11-14 (LAAG), Lys25, Gln78, and 83-84 (GT). Asp108 provides a ligand contact to Mg(2+). UDP-N-acetyl-alpha-D-glucosamine contacts are provided by Gly144, Glu158, Asn173, and Asn230. Asn230 contacts Mg(2+). Residues 233–253 (AQLAQAEAAMQARLRQAAMDA) are linker. Residues 254–448 (GVTLIAPETV…FRNAKLRQTK (195 aa)) form an N-acetyltransferase region. Arg319 and Lys337 together coordinate UDP-N-acetyl-alpha-D-glucosamine. Catalysis depends on His349, which acts as the Proton acceptor. UDP-N-acetyl-alpha-D-glucosamine contacts are provided by Tyr352 and Asn363. Residues Ala366, 372-373 (NY), Ser409, and Arg426 each bind acetyl-CoA. A disordered region spans residues 427-448 (SPQTTKEGAAARFRNAKLRQTK).

In the N-terminal section; belongs to the N-acetylglucosamine-1-phosphate uridyltransferase family. It in the C-terminal section; belongs to the transferase hexapeptide repeat family. Homotrimer. The cofactor is Mg(2+).

It is found in the cytoplasm. The catalysed reaction is alpha-D-glucosamine 1-phosphate + acetyl-CoA = N-acetyl-alpha-D-glucosamine 1-phosphate + CoA + H(+). It carries out the reaction N-acetyl-alpha-D-glucosamine 1-phosphate + UTP + H(+) = UDP-N-acetyl-alpha-D-glucosamine + diphosphate. It participates in nucleotide-sugar biosynthesis; UDP-N-acetyl-alpha-D-glucosamine biosynthesis; N-acetyl-alpha-D-glucosamine 1-phosphate from alpha-D-glucosamine 6-phosphate (route II): step 2/2. Its pathway is nucleotide-sugar biosynthesis; UDP-N-acetyl-alpha-D-glucosamine biosynthesis; UDP-N-acetyl-alpha-D-glucosamine from N-acetyl-alpha-D-glucosamine 1-phosphate: step 1/1. It functions in the pathway bacterial outer membrane biogenesis; LPS lipid A biosynthesis. In terms of biological role, catalyzes the last two sequential reactions in the de novo biosynthetic pathway for UDP-N-acetylglucosamine (UDP-GlcNAc). The C-terminal domain catalyzes the transfer of acetyl group from acetyl coenzyme A to glucosamine-1-phosphate (GlcN-1-P) to produce N-acetylglucosamine-1-phosphate (GlcNAc-1-P), which is converted into UDP-GlcNAc by the transfer of uridine 5-monophosphate (from uridine 5-triphosphate), a reaction catalyzed by the N-terminal domain. This Bradyrhizobium sp. (strain ORS 278) protein is Bifunctional protein GlmU.